The sequence spans 86 residues: Small ribosomal subunit protein bS16 (86 aa).

This sequence belongs to the bacterial ribosomal protein bS16 family.

The chain is Small ribosomal subunit protein bS16 from Bordetella petrii (strain ATCC BAA-461 / DSM 12804 / CCUG 43448).